We begin with the raw amino-acid sequence, 347 residues long: Haptoglobin (347 aa).

Positions 1 to 18 are cleaved as a signal peptide; that stretch reads MRALGAVVTLLLWGQLFA. The Sushi domain occupies 31 to 88; that stretch reads DSCPKPPEIANGYVEHLVRYRCRQFYKLQTEGDGIYTLNSEKQWVNPAAGDKLPKCEA. Cystine bridges form between Cys52–Cys86, Cys90–Cys207, Cys250–Cys281, and Cys292–Cys322. The region spanning 103–345 is the Peptidase S1 domain; the sequence is IIGGSMDAKG…LKDWVQETMA (243 aa). Asn148 and Asn152 each carry an N-linked (GlcNAc...) asparagine glycan. The interaction with CD163 stretch occupies residues 259-264; that stretch reads VPEKKG.

The protein belongs to the peptidase S1 family. In terms of assembly, tetramer of two alpha and two beta chains; disulfide-linked. The hemoglobin/haptoglobin complex is composed of a haptoglobin dimer bound to two hemoglobin alpha-beta dimers. Interacts with CD163. Interacts with ERGIC3. Expressed by the liver and secreted in plasma.

The protein localises to the secreted. Its function is as follows. As a result of hemolysis, hemoglobin is found to accumulate in the kidney and is secreted in the urine. Haptoglobin captures, and combines with free plasma hemoglobin to allow hepatic recycling of heme iron and to prevent kidney damage. Haptoglobin also acts as an antioxidant, has antibacterial activity and plays a role in modulating many aspects of the acute phase response. Hemoglobin/haptoglobin complexes are rapidly cleared by the macrophage CD163 scavenger receptor expressed on the surface of liver Kupfer cells through an endocytic lysosomal degradation pathway. This is Haptoglobin (Hp) from Rattus norvegicus (Rat).